Reading from the N-terminus, the 193-residue chain is Potassium-transporting ATPase KdpC subunit (193 aa).

The helical transmembrane segment at 14–34 (ITFTFLVLCGLVYPLIVTGIA) threads the bilayer.

The protein belongs to the KdpC family. In terms of assembly, the system is composed of three essential subunits: KdpA, KdpB and KdpC.

Its subcellular location is the cell membrane. Part of the high-affinity ATP-driven potassium transport (or Kdp) system, which catalyzes the hydrolysis of ATP coupled with the electrogenic transport of potassium into the cytoplasm. This subunit acts as a catalytic chaperone that increases the ATP-binding affinity of the ATP-hydrolyzing subunit KdpB by the formation of a transient KdpB/KdpC/ATP ternary complex. This chain is Potassium-transporting ATPase KdpC subunit, found in Bacillus cereus (strain B4264).